The sequence spans 299 residues: Protease HtpX homolog (299 aa).

The next 2 membrane-spanning stretches (helical) occupy residues 19-39 and 41-61; these read LFIV…VWYF and WGIT…WIAY. Residue His146 participates in Zn(2+) binding. The active site involves Glu147. His150 provides a ligand contact to Zn(2+). Transmembrane regions (helical) follow at residues 156–176 and 198–218; these read ILLM…RDVF and IILL…VLII. Position 227 (Glu227) interacts with Zn(2+).

Belongs to the peptidase M48B family. Zn(2+) serves as cofactor.

It localises to the cell membrane. The chain is Protease HtpX homolog from Caldanaerobacter subterraneus subsp. tengcongensis (strain DSM 15242 / JCM 11007 / NBRC 100824 / MB4) (Thermoanaerobacter tengcongensis).